The following is a 121-amino-acid chain: Large ribosomal subunit protein uL22 (121 aa).

This sequence belongs to the universal ribosomal protein uL22 family. Part of the 50S ribosomal subunit.

This protein binds specifically to 23S rRNA; its binding is stimulated by other ribosomal proteins, e.g. L4, L17, and L20. It is important during the early stages of 50S assembly. It makes multiple contacts with different domains of the 23S rRNA in the assembled 50S subunit and ribosome. Functionally, the globular domain of the protein is located near the polypeptide exit tunnel on the outside of the subunit, while an extended beta-hairpin is found that lines the wall of the exit tunnel in the center of the 70S ribosome. The polypeptide is Large ribosomal subunit protein uL22 (Pseudarthrobacter chlorophenolicus (strain ATCC 700700 / DSM 12829 / CIP 107037 / JCM 12360 / KCTC 9906 / NCIMB 13794 / A6) (Arthrobacter chlorophenolicus)).